Here is a 248-residue protein sequence, read N- to C-terminus: ATP synthase subunit a, chloroplastic (248 aa).

Helical transmembrane passes span 34 to 54 (LHGQ…IFAL), 95 to 115 (VPYI…GALI), 134 to 154 (INVT…AGIS), and 203 to 223 (VFAL…GLFA).

The protein belongs to the ATPase A chain family. F-type ATPases have 2 components, CF(1) - the catalytic core - and CF(0) - the membrane proton channel. CF(1) has five subunits: alpha(3), beta(3), gamma(1), delta(1), epsilon(1). CF(0) has four main subunits: a, b, b' and c.

Its subcellular location is the plastid. The protein localises to the chloroplast thylakoid membrane. In terms of biological role, key component of the proton channel; it plays a direct role in the translocation of protons across the membrane. This Guillardia theta (Cryptophyte) protein is ATP synthase subunit a, chloroplastic.